The sequence spans 376 residues: Queuine tRNA-ribosyltransferase (376 aa).

The active-site Proton acceptor is Asp-89. Substrate contacts are provided by residues 89–93 (DSGGF), Asp-143, Gln-194, and Gly-221. Residues 252–258 (GVGIPSN) form an RNA binding region. Asp-271 serves as the catalytic Nucleophile. The segment at 276-280 (ARNGR) is RNA binding; important for wobble base 34 recognition. Zn(2+) is bound by residues Cys-309, Cys-311, Cys-314, and His-340.

Belongs to the queuine tRNA-ribosyltransferase family. As to quaternary structure, homodimer. Within each dimer, one monomer is responsible for RNA recognition and catalysis, while the other monomer binds to the replacement base PreQ1. The cofactor is Zn(2+).

It catalyses the reaction 7-aminomethyl-7-carbaguanine + guanosine(34) in tRNA = 7-aminomethyl-7-carbaguanosine(34) in tRNA + guanine. It functions in the pathway tRNA modification; tRNA-queuosine biosynthesis. Its function is as follows. Catalyzes the base-exchange of a guanine (G) residue with the queuine precursor 7-aminomethyl-7-deazaguanine (PreQ1) at position 34 (anticodon wobble position) in tRNAs with GU(N) anticodons (tRNA-Asp, -Asn, -His and -Tyr). Catalysis occurs through a double-displacement mechanism. The nucleophile active site attacks the C1' of nucleotide 34 to detach the guanine base from the RNA, forming a covalent enzyme-RNA intermediate. The proton acceptor active site deprotonates the incoming PreQ1, allowing a nucleophilic attack on the C1' of the ribose to form the product. After dissociation, two additional enzymatic reactions on the tRNA convert PreQ1 to queuine (Q), resulting in the hypermodified nucleoside queuosine (7-(((4,5-cis-dihydroxy-2-cyclopenten-1-yl)amino)methyl)-7-deazaguanosine). The chain is Queuine tRNA-ribosyltransferase from Clostridium botulinum (strain Hall / ATCC 3502 / NCTC 13319 / Type A).